We begin with the raw amino-acid sequence, 606 residues long: Urocanate reductase (606 aa).

The tat-type signal signal peptide spans M1–A40. T111 carries the post-translational modification FMN phosphoryl threonine. A163, E182, T191, G195, G196, A197, A305, and D373 together coordinate FAD. R433 functions as the Proton donor in the catalytic mechanism. FAD contacts are provided by E572 and I588.

It belongs to the FAD-dependent oxidoreductase 2 family. FRD/SDH subfamily. It depends on FAD as a cofactor. The cofactor is FMN. Post-translationally, predicted to be exported by the Tat system. The position of the signal peptide cleavage has not been experimentally proven.

It catalyses the reaction dihydrourocanate + A = urocanate + AH2. In terms of biological role, catalyzes the two-electron reduction of urocanate to dihydrourocanate (also named imidazole propionate or deamino-histidine). Dihydrourocanate is present at higher concentrations in subjects with type 2 diabetes, and directly impairs glucose tolerance and insulin signaling at the level of insulin receptor substrate (IRS) through activation of p38 gamma (MAPK12)-p62-mTORC1. Therefore, the UrdA enzyme from the gut bacteria E.lenta strain DSM 2243 may contribute to the pathogenesis of type 2 diabetes by producing the microbial metabolite dihydrourocanate. This is Urocanate reductase from Eggerthella lenta (strain ATCC 25559 / DSM 2243 / CCUG 17323 / JCM 9979 / KCTC 3265 / NCTC 11813 / VPI 0255 / 1899 B) (Eubacterium lentum).